We begin with the raw amino-acid sequence, 646 residues long: DNA mismatch repair protein MutL (646 aa).

Disordered stretches follow at residues 356-380 (FENR…NENS) and 415-452 (TKNS…AKPH). Over residues 424-436 (SEATSNEAASAEI) the composition is skewed to low complexity.

It belongs to the DNA mismatch repair MutL/HexB family.

In terms of biological role, this protein is involved in the repair of mismatches in DNA. It is required for dam-dependent methyl-directed DNA mismatch repair. May act as a 'molecular matchmaker', a protein that promotes the formation of a stable complex between two or more DNA-binding proteins in an ATP-dependent manner without itself being part of a final effector complex. In Staphylococcus carnosus (strain TM300), this protein is DNA mismatch repair protein MutL.